Here is a 264-residue protein sequence, read N- to C-terminus: MQKYAQILDLVRERNPLVHQITNYVTVNDCANMTICFGASPVMSHAPEDVVDMIKIASALVLNIGTLDEKQIEGMIAAANEAKKCGIPIVLDPVGAGATLYRTQTAERFMNEFPLAVIKGNAGEIGTLAGVSATVRGVDSGNISGDPKEIAHSLAKEYGCTVVISGAEDIISDGKRIAGVLNGVPIMGKISGTGCMASAVCGACAAVSDSMDGCITAMAALGIAGEEAAKTAKGPGSFKPAFFDAVTSLTNEQFIKSARISEYQ.

Methionine 43 provides a ligand contact to substrate. 2 residues coordinate ATP: lysine 119 and serine 165. Residue glycine 192 coordinates substrate.

Belongs to the Thz kinase family. Requires Mg(2+) as cofactor.

The enzyme catalyses 5-(2-hydroxyethyl)-4-methylthiazole + ATP = 4-methyl-5-(2-phosphooxyethyl)-thiazole + ADP + H(+). It functions in the pathway cofactor biosynthesis; thiamine diphosphate biosynthesis; 4-methyl-5-(2-phosphoethyl)-thiazole from 5-(2-hydroxyethyl)-4-methylthiazole: step 1/1. In terms of biological role, catalyzes the phosphorylation of the hydroxyl group of 4-methyl-5-beta-hydroxyethylthiazole (THZ). This Methanocorpusculum labreanum (strain ATCC 43576 / DSM 4855 / Z) protein is Hydroxyethylthiazole kinase.